A 196-amino-acid polypeptide reads, in one-letter code: Cytochrome c biogenesis ATP-binding export protein CcmA (196 aa).

Residues 2-195 (LSFHQLKFNI…HIKSAQILQL (194 aa)) enclose the ABC transporter domain. 34 to 41 (GANGCGKT) contacts ATP.

The protein belongs to the ABC transporter superfamily. CcmA exporter (TC 3.A.1.107) family. The complex is composed of two ATP-binding proteins (CcmA) and two transmembrane proteins (CcmB).

It localises to the cell inner membrane. It catalyses the reaction heme b(in) + ATP + H2O = heme b(out) + ADP + phosphate + H(+). Its function is as follows. Part of the ABC transporter complex CcmAB involved in the biogenesis of c-type cytochromes; once thought to export heme, this seems not to be the case, but its exact role is uncertain. Responsible for energy coupling to the transport system. This Rickettsia bellii (strain RML369-C) protein is Cytochrome c biogenesis ATP-binding export protein CcmA.